Here is a 302-residue protein sequence, read N- to C-terminus: tRNA pseudouridine synthase B (302 aa).

Residue Asp-38 is the Nucleophile of the active site.

It belongs to the pseudouridine synthase TruB family. Type 1 subfamily.

It carries out the reaction uridine(55) in tRNA = pseudouridine(55) in tRNA. In terms of biological role, responsible for synthesis of pseudouridine from uracil-55 in the psi GC loop of transfer RNAs. This is tRNA pseudouridine synthase B from Ligilactobacillus salivarius (strain UCC118) (Lactobacillus salivarius).